A 230-amino-acid polypeptide reads, in one-letter code: Lipopolysaccharide core heptose(II) kinase WaaY (230 aa).

Belongs to the protein kinase superfamily. RfaY/WaaY family.

The enzyme catalyses alpha-D-Glc-(1-&gt;3)-[L-alpha-D-Hep-(1-&gt;7)]-L-alpha-D-Hep-(1-&gt;3)-4-O-PO3(2-)-L-alpha-D-Hep-(1-&gt;5)-[alpha-Kdo-(2-&gt;4)]-alpha-Kdo-(2-&gt;6)-lipid A + ATP = alpha-D-Glc-(1-&gt;3)-[L-alpha-D-Hep-(1-&gt;7)]-4-O-PO3(2-)-L-alpha-D-Hep-(1-&gt;3)-4-O-PO3(2-)-L-alpha-D-Hep-(1-&gt;5)-[alpha-Kdo-(2-&gt;4)]-alpha-Kdo-(2-&gt;6)-lipid A + ADP + H(+). Its pathway is bacterial outer membrane biogenesis; LPS core biosynthesis. In terms of biological role, kinase involved in the biosynthesis of the core oligosaccharide region of lipopolysaccharide (LPS). Catalyzes the phosphorylation of the second heptose unit (HepII) of the inner core. This chain is Lipopolysaccharide core heptose(II) kinase WaaY, found in Escherichia coli.